Reading from the N-terminus, the 82-residue chain is Small ribosomal subunit protein bS16 (82 aa).

Belongs to the bacterial ribosomal protein bS16 family.

The polypeptide is Small ribosomal subunit protein bS16 (Dehalococcoides mccartyi (strain ATCC BAA-2266 / KCTC 15142 / 195) (Dehalococcoides ethenogenes (strain 195))).